The primary structure comprises 547 residues: Chaperonin GroEL (547 aa).

Residues 30–33 (TLGP), K51, 87–91 (DGTTT), G415, and D496 contribute to the ATP site. Positions 528–547 (KEGAGAGGGMPDMGGMGGMM) are disordered. Residues 531–547 (AGAGGGMPDMGGMGGMM) are compositionally biased toward gly residues.

This sequence belongs to the chaperonin (HSP60) family. Forms a cylinder of 14 subunits composed of two heptameric rings stacked back-to-back. Interacts with the co-chaperonin GroES.

The protein resides in the cytoplasm. The enzyme catalyses ATP + H2O + a folded polypeptide = ADP + phosphate + an unfolded polypeptide.. Together with its co-chaperonin GroES, plays an essential role in assisting protein folding. The GroEL-GroES system forms a nano-cage that allows encapsulation of the non-native substrate proteins and provides a physical environment optimized to promote and accelerate protein folding. This chain is Chaperonin GroEL, found in Dinoroseobacter shibae (strain DSM 16493 / NCIMB 14021 / DFL 12).